The chain runs to 119 residues: uncharacterized protein (119 aa).

This is an uncharacterized protein from Ureaplasma parvum serovar 3 (strain ATCC 700970).